The primary structure comprises 587 residues: Dynein axonemal intermediate chain 2 (587 aa).

WD repeat units lie at residues 214–254, 261–302, 362–401, and 405–445; these read RPAS…NPVE, SHRD…EPTE, GHHG…SSIM, and YHTS…NNPS. Disordered stretches follow at residues 519–542 and 562–587; these read LKER…DMKE and KEQQ…IVHE.

Belongs to the dynein intermediate chain family. As to quaternary structure, consists of at least two heavy chains and a number of intermediate and light chains. Interacts with DNAAF2. Interacts with DNAAF6/PIH1D3. Interacts with HEATR2; probably involved in outer arm dynein assembly. Interacts with C16ORF71/DAAP1.

The protein resides in the cytoplasm. It localises to the cytoskeleton. It is found in the cilium axoneme. Its subcellular location is the dynein axonemal particle. In terms of biological role, part of the dynein complex of multiciliated cell cilia. This chain is Dynein axonemal intermediate chain 2 (dnai2), found in Xenopus laevis (African clawed frog).